The following is a 167-amino-acid chain: Crossover junction endodeoxyribonuclease RuvC (167 aa).

Catalysis depends on residues Asp8, Glu67, and Asp139. Mg(2+)-binding residues include Asp8, Glu67, and Asp139.

Belongs to the RuvC family. In terms of assembly, homodimer which binds Holliday junction (HJ) DNA. The HJ becomes 2-fold symmetrical on binding to RuvC with unstacked arms; it has a different conformation from HJ DNA in complex with RuvA. In the full resolvosome a probable DNA-RuvA(4)-RuvB(12)-RuvC(2) complex forms which resolves the HJ. Mg(2+) is required as a cofactor.

Its subcellular location is the cytoplasm. The enzyme catalyses Endonucleolytic cleavage at a junction such as a reciprocal single-stranded crossover between two homologous DNA duplexes (Holliday junction).. Its function is as follows. The RuvA-RuvB-RuvC complex processes Holliday junction (HJ) DNA during genetic recombination and DNA repair. Endonuclease that resolves HJ intermediates. Cleaves cruciform DNA by making single-stranded nicks across the HJ at symmetrical positions within the homologous arms, yielding a 5'-phosphate and a 3'-hydroxyl group; requires a central core of homology in the junction. The consensus cleavage sequence is 5'-(A/T)TT(C/G)-3'. Cleavage occurs on the 3'-side of the TT dinucleotide at the point of strand exchange. HJ branch migration catalyzed by RuvA-RuvB allows RuvC to scan DNA until it finds its consensus sequence, where it cleaves and resolves the cruciform DNA. The sequence is that of Crossover junction endodeoxyribonuclease RuvC from Halorhodospira halophila (strain DSM 244 / SL1) (Ectothiorhodospira halophila (strain DSM 244 / SL1)).